Here is a 293-residue protein sequence, read N- to C-terminus: Small ribosomal subunit biogenesis GTPase RsgA (293 aa).

Positions 63 to 223 (KNQLNRPPIA…VADTPGFSSL (161 aa)) constitute a CP-type G domain. Residues 112-115 (SKTD) and 166-174 (GQSGVGKSS) each bind GTP. The Zn(2+) site is built by Cys247, Cys252, His254, and Cys260.

It belongs to the TRAFAC class YlqF/YawG GTPase family. RsgA subfamily. Monomer. Associates with 30S ribosomal subunit, binds 16S rRNA. It depends on Zn(2+) as a cofactor.

The protein localises to the cytoplasm. In terms of biological role, one of several proteins that assist in the late maturation steps of the functional core of the 30S ribosomal subunit. Helps release RbfA from mature subunits. May play a role in the assembly of ribosomal proteins into the subunit. Circularly permuted GTPase that catalyzes slow GTP hydrolysis, GTPase activity is stimulated by the 30S ribosomal subunit. This chain is Small ribosomal subunit biogenesis GTPase RsgA, found in Shouchella clausii (strain KSM-K16) (Alkalihalobacillus clausii).